The primary structure comprises 764 residues: 5-methyltetrahydropteroyltriglutamate--homocysteine methyltransferase (764 aa).

5-methyltetrahydropteroyltri-L-glutamate contacts are provided by residues 16 to 19 (RELK) and Lys112. L-homocysteine-binding positions include 431-433 (IGS) and Glu484. L-methionine contacts are provided by residues 431–433 (IGS) and Glu484. Residues 515 to 516 (RC) and Trp561 each bind 5-methyltetrahydropteroyltri-L-glutamate. An L-homocysteine-binding site is contributed by Asp599. Asp599 is an L-methionine binding site. Glu605 contacts 5-methyltetrahydropteroyltri-L-glutamate. His641, Cys643, and Glu665 together coordinate Zn(2+). The Proton donor role is filled by His694. Position 726 (Cys726) interacts with Zn(2+).

It belongs to the vitamin-B12 independent methionine synthase family. Requires Zn(2+) as cofactor.

It carries out the reaction 5-methyltetrahydropteroyltri-L-glutamate + L-homocysteine = tetrahydropteroyltri-L-glutamate + L-methionine. The protein operates within amino-acid biosynthesis; L-methionine biosynthesis via de novo pathway; L-methionine from L-homocysteine (MetE route): step 1/1. Its function is as follows. Catalyzes the transfer of a methyl group from 5-methyltetrahydrofolate to homocysteine resulting in methionine formation. The protein is 5-methyltetrahydropteroyltriglutamate--homocysteine methyltransferase of Paraburkholderia xenovorans (strain LB400).